The primary structure comprises 205 residues: Holliday junction branch migration complex subunit RuvA (205 aa).

Residues 1-65 (MIGRLRGAVA…SAGLRLYGFL (65 aa)) form a domain I region. Positions 66–144 (TREDRRAFVL…TDGPVLMSAP (79 aa)) are domain II. The tract at residues 145–153 (TSSAPSAPA) is flexible linker. The interval 153 to 205 (AKPAPTGDAVAALMGLGVAEVNARRVVEAAAAELGEEATVQALIKAGLKELGR) is domain III.

It belongs to the RuvA family. As to quaternary structure, homotetramer. Forms an RuvA(8)-RuvB(12)-Holliday junction (HJ) complex. HJ DNA is sandwiched between 2 RuvA tetramers; dsDNA enters through RuvA and exits via RuvB. An RuvB hexamer assembles on each DNA strand where it exits the tetramer. Each RuvB hexamer is contacted by two RuvA subunits (via domain III) on 2 adjacent RuvB subunits; this complex drives branch migration. In the full resolvosome a probable DNA-RuvA(4)-RuvB(12)-RuvC(2) complex forms which resolves the HJ.

It is found in the cytoplasm. In terms of biological role, the RuvA-RuvB-RuvC complex processes Holliday junction (HJ) DNA during genetic recombination and DNA repair, while the RuvA-RuvB complex plays an important role in the rescue of blocked DNA replication forks via replication fork reversal (RFR). RuvA specifically binds to HJ cruciform DNA, conferring on it an open structure. The RuvB hexamer acts as an ATP-dependent pump, pulling dsDNA into and through the RuvAB complex. HJ branch migration allows RuvC to scan DNA until it finds its consensus sequence, where it cleaves and resolves the cruciform DNA. This Caulobacter vibrioides (strain ATCC 19089 / CIP 103742 / CB 15) (Caulobacter crescentus) protein is Holliday junction branch migration complex subunit RuvA.